A 116-amino-acid polypeptide reads, in one-letter code: Ferredoxin (116 aa).

4Fe-4S ferredoxin-type domains follow at residues 2 to 31 (TYVV…EGER) and 35 to 64 (FMLV…PESP). 2 residues coordinate [3Fe-4S] cluster: C9 and C17. 4 residues coordinate [4Fe-4S] cluster: C21, C44, C47, and C50. C54 contributes to the [3Fe-4S] cluster binding site.

[4Fe-4S] cluster serves as cofactor. [3Fe-4S] cluster is required as a cofactor.

Its function is as follows. Ferredoxins are iron-sulfur proteins that transfer electrons in a wide variety of metabolic reactions. The polypeptide is Ferredoxin (fdxA) (Rickettsia conorii (strain ATCC VR-613 / Malish 7)).